The chain runs to 246 residues: MSLQWTAVATFLYAEVFVVLLLCIPFISPKRWQKIFKSRLVELLVSYGNTFFVVLIVILVLLVIDAVREIRKYDDVTEKVNLQNNPGAMEHFHMKLFRAQRNLYIAGFSLLLSFLLRRLVTLISQQATLLASNEAFKKQAESASEAAKKYMEENDQLKKGAAVDGGKLDVGNAEVKLEEENRSLKADLQKLKDELASTKQKLEKAENQVLAMRKQSEGLTKEYDRLLEEHAKLQAAVDGPMDKKEE.

Residues 2–6 are Lumenal-facing; the sequence is SLQWT. Residues 7 to 27 traverse the membrane as a helical segment; sequence AVATFLYAEVFVVLLLCIPFI. Over 28-43 the chain is Cytoplasmic; the sequence is SPKRWQKIFKSRLVEL. The helical transmembrane segment at 44–64 threads the bilayer; it reads LVSYGNTFFVVLIVILVLLVI. Residues 65–102 are Lumenal-facing; sequence DAVREIRKYDDVTEKVNLQNNPGAMEHFHMKLFRAQRN. The helical transmembrane segment at 103–123 threads the bilayer; that stretch reads LYIAGFSLLLSFLLRRLVTLI. Over 124-246 the chain is Cytoplasmic; it reads SQQATLLASN…VDGPMDKKEE (123 aa). The stretch at 165–237 forms a coiled coil; it reads GGKLDVGNAE…EEHAKLQAAV (73 aa). Positions 243–246 match the Di-lysine motif motif; the sequence is KKEE.

The protein belongs to the BCAP29/BCAP31 family. As to quaternary structure, homodimer and heterodimer with BCAP29. Binds CASP8 (isoform 9) as a complex containing BCAP31, BCAP29, BCL2 and/or BCL2L1. Forms a complex (via C-terminus) with TOMM40 which mediates the translocation of components of the mitochondrial membrane respiratory chain NADH dehydrogenase (Complex I) from the cytosol to the mitochondria; within the complex BCAP31 interacts directly with unprocessed and processed NDUFS4 and NDUFB11. Interacts with VDAC1. Interacts with VAMP3, VAMP1 and membrane IgD immunoglobulins. Interacts with HACD2. Interacts with DNM1L; may form part of a larger protein complex at the endoplasmic reticulum-mitochondrial interface during mitochondrial fission. (Microbial infection) Interacts (via C-terminus) with HRSV membrane protein SH; this interaction is direct. Post-translationally, cleaved by CASP8 and other caspases. As to expression, ubiquitous. Highly expressed in neurons and discrete endocrine cells.

Its subcellular location is the endoplasmic reticulum membrane. The protein localises to the endoplasmic reticulum-Golgi intermediate compartment membrane. Functionally, functions as a chaperone protein. Is one of the most abundant endoplasmic reticulum (ER) proteins. Plays a role in the export of secreted proteins in the ER, the recognition of abnormally folded protein and their targeting to the ER associated-degradation (ERAD). Also serves as a cargo receptor for the export of transmembrane proteins. Plays a role in the assembly of the mitochondrial membrane respiratory chain NADH dehydrogenase (Complex I) by stimulating the translocation of NDUFS4 and NDUFB11 from the cytosol to the mitochondria via interaction with TOMM40. In response to ER stress, delocalizes from the ER-mitochondria contact sites and binds BCL2. May be involved in CASP8-mediated apoptosis. This chain is B-cell receptor-associated protein 31, found in Homo sapiens (Human).